A 695-amino-acid polypeptide reads, in one-letter code: MKLHQFLVFLFLFLSCFALSSWALPLCSDSRAPSEVNSTLSFCPYKGKTCCNTMKDTSLMKQFQAMNISDKGCASVVKSILCANCDPFSSDLFRDNSDQQSVPILCNSTSSANSTENFCSETWETCQNVSISGSLFAASLQGRAGAPSNKNASKLADLWQSKTDFCSAFGGASSNETVCFSGEPVALNDNDTTPDKPPSGICLEKIGNGSYLNMVPHPDGSNRAFFSTQPGIVFLAGIPDQDSGGVLDVDPSSPFVDMTDEIHFDTEFGMMGMAFHPKFAQNGRFFASFNCDKSKWPGCTGRCSCNSDVNCDPSKLTPDSGSQPCQYQTVIAEYTANSTSSDPSKAKNAKPTEVRRIFTMGLPFTSHHAGQILFGPDGYLYFMMGDGGGGADPYNFAQNKKSLLGKIMRLDVDNIPSASEISKMGLWGNYSIPKDNPFREDKELEPEIWAVGLRNPWRCSFDSSRPSYFMCADVGQDTYEEVDLISKGGNYGWRVYEGPDLFHPESSPGGNTSVKSLNPIFPVMGYNHSEVDSSGKSASITGGYFYRSETDPCIAGRYVYADLYGNGVWAGIETPANSGSFVTKRTTFSCASDSPMKCSDSPGTSGLSLGYVFSFGEDNNKDIYLLTSNGVYRVVRPSRCNLTCSKENSTARRNPGTSSSPSSSSSSCYKHINGFHGSLVVLFVSLSLILLGLLN.

Residues 1–23 (MKLHQFLVFLFLFLSCFALSSWA) form the signal peptide. Residues Asn37, Asn67, Asn107, Asn113, Asn128, Asn151, Asn175, Asn190, Asn208, Asn337, Asn429, Asn511, Asn527, Asn641, and Asn648 are each glycosylated (N-linked (GlcNAc...) asparagine). Ser665 carries GPI-anchor amidated serine lipidation. The propeptide at 666-695 (SSCYKHINGFHGSLVVLFVSLSLILLGLLN) is removed in mature form.

Belongs to the PQQ oxidoreductase GdhB family. It depends on pyrroloquinoline quinone as a cofactor.

The protein localises to the cell membrane. This Arabidopsis thaliana (Mouse-ear cress) protein is HIPL1 protein (HIPL1).